The primary structure comprises 191 residues: Fe/S biogenesis protein NfuA (191 aa).

[4Fe-4S] cluster-binding residues include cysteine 149 and cysteine 152.

It belongs to the NfuA family. In terms of assembly, homodimer. [4Fe-4S] cluster is required as a cofactor.

In terms of biological role, involved in iron-sulfur cluster biogenesis. Binds a 4Fe-4S cluster, can transfer this cluster to apoproteins, and thereby intervenes in the maturation of Fe/S proteins. Could also act as a scaffold/chaperone for damaged Fe/S proteins. The sequence is that of Fe/S biogenesis protein NfuA from Photorhabdus laumondii subsp. laumondii (strain DSM 15139 / CIP 105565 / TT01) (Photorhabdus luminescens subsp. laumondii).